The chain runs to 145 residues: Protein BUD31 homolog 2 (145 aa).

It belongs to the BUD31 (G10) family.

The protein resides in the nucleus. The protein is Protein BUD31 homolog 2 of Oryza sativa subsp. japonica (Rice).